Consider the following 517-residue polypeptide: Crotonobetaine/carnitine--CoA ligase (517 aa).

It belongs to the ATP-dependent AMP-binding enzyme family.

The enzyme catalyses 4-(trimethylamino)butanoate + ATP + CoA = 4-(trimethylamino)butanoyl-CoA + AMP + diphosphate. It catalyses the reaction crotonobetaine + ATP + CoA = crotonobetainyl-CoA + AMP + diphosphate. The catalysed reaction is (R)-carnitine + ATP + CoA = (R)-carnitinyl-CoA + AMP + diphosphate. It functions in the pathway amine and polyamine metabolism; carnitine metabolism. Its function is as follows. Catalyzes the transfer of CoA to carnitine, generating the initial carnitinyl-CoA needed for the CaiB reaction cycle. Also has activity toward crotonobetaine and gamma-butyrobetaine. This chain is Crotonobetaine/carnitine--CoA ligase, found in Escherichia coli O9:H4 (strain HS).